Consider the following 339-residue polypeptide: Ketol-acid reductoisomerase (NADP(+)) (339 aa).

The region spanning 1–182 (MRVYYDRDAD…GGGRAGIIET (182 aa)) is the KARI N-terminal Rossmann domain. Residues 24 to 27 (YGSQ), R48, S51, and 83 to 86 (DEGQ) contribute to the NADP(+) site. H108 is a catalytic residue. Residue G134 coordinates NADP(+). Residues 183–328 (SFKEEVETDL…EKLRGMMPWI (146 aa)) form the KARI C-terminal knotted domain. 4 residues coordinate Mg(2+): D191, E195, E227, and E231. S252 contributes to the substrate binding site.

It belongs to the ketol-acid reductoisomerase family. The cofactor is Mg(2+).

The enzyme catalyses (2R)-2,3-dihydroxy-3-methylbutanoate + NADP(+) = (2S)-2-acetolactate + NADPH + H(+). It catalyses the reaction (2R,3R)-2,3-dihydroxy-3-methylpentanoate + NADP(+) = (S)-2-ethyl-2-hydroxy-3-oxobutanoate + NADPH + H(+). Its pathway is amino-acid biosynthesis; L-isoleucine biosynthesis; L-isoleucine from 2-oxobutanoate: step 2/4. It functions in the pathway amino-acid biosynthesis; L-valine biosynthesis; L-valine from pyruvate: step 2/4. Involved in the biosynthesis of branched-chain amino acids (BCAA). Catalyzes an alkyl-migration followed by a ketol-acid reduction of (S)-2-acetolactate (S2AL) to yield (R)-2,3-dihydroxy-isovalerate. In the isomerase reaction, S2AL is rearranged via a Mg-dependent methyl migration to produce 3-hydroxy-3-methyl-2-ketobutyrate (HMKB). In the reductase reaction, this 2-ketoacid undergoes a metal-dependent reduction by NADPH to yield (R)-2,3-dihydroxy-isovalerate. In Gluconacetobacter diazotrophicus (strain ATCC 49037 / DSM 5601 / CCUG 37298 / CIP 103539 / LMG 7603 / PAl5), this protein is Ketol-acid reductoisomerase (NADP(+)).